The chain runs to 338 residues: Anthranilate phosphoribosyltransferase (338 aa).

Residues glycine 81, glycine 84–aspartate 85, threonine 89, asparagine 91–threonine 94, lysine 109–serine 117, and threonine 121 each bind 5-phospho-alpha-D-ribose 1-diphosphate. Glycine 81 serves as a coordination point for anthranilate. A Mg(2+)-binding site is contributed by serine 93. Asparagine 112 serves as a coordination point for anthranilate. Arginine 167 contacts anthranilate. Mg(2+)-binding residues include aspartate 225 and glutamate 226.

Belongs to the anthranilate phosphoribosyltransferase family. In terms of assembly, homodimer. The cofactor is Mg(2+).

It carries out the reaction N-(5-phospho-beta-D-ribosyl)anthranilate + diphosphate = 5-phospho-alpha-D-ribose 1-diphosphate + anthranilate. It participates in amino-acid biosynthesis; L-tryptophan biosynthesis; L-tryptophan from chorismate: step 2/5. Its function is as follows. Catalyzes the transfer of the phosphoribosyl group of 5-phosphorylribose-1-pyrophosphate (PRPP) to anthranilate to yield N-(5'-phosphoribosyl)-anthranilate (PRA). The protein is Anthranilate phosphoribosyltransferase of Rhizobium rhizogenes (strain K84 / ATCC BAA-868) (Agrobacterium radiobacter).